The chain runs to 368 residues: Lipoyl synthase, chloroplastic (368 aa).

Disordered regions lie at residues 1–30 (MQSS…RGSV) and 42–61 (PTVG…RDPE). Residues C94, C99, C105, C131, C135, C138, and S346 each coordinate [4Fe-4S] cluster. The region spanning 114–335 (GEGDGIATAT…KEYGESVGFR (222 aa)) is the Radical SAM core domain.

This sequence belongs to the radical SAM superfamily. Lipoyl synthase family. Requires [4Fe-4S] cluster as cofactor.

The protein resides in the plastid. It is found in the chloroplast. It carries out the reaction [[Fe-S] cluster scaffold protein carrying a second [4Fe-4S](2+) cluster] + N(6)-octanoyl-L-lysyl-[protein] + 2 oxidized [2Fe-2S]-[ferredoxin] + 2 S-adenosyl-L-methionine + 4 H(+) = [[Fe-S] cluster scaffold protein] + N(6)-[(R)-dihydrolipoyl]-L-lysyl-[protein] + 4 Fe(3+) + 2 hydrogen sulfide + 2 5'-deoxyadenosine + 2 L-methionine + 2 reduced [2Fe-2S]-[ferredoxin]. It functions in the pathway protein modification; protein lipoylation via endogenous pathway; protein N(6)-(lipoyl)lysine from octanoyl-[acyl-carrier-protein]: step 2/2. Its function is as follows. Catalyzes the radical-mediated insertion of two sulfur atoms into the C-6 and C-8 positions of the octanoyl moiety bound to the lipoyl domains of lipoate-dependent enzymes, thereby converting the octanoylated domains into lipoylated derivatives. The sequence is that of Lipoyl synthase, chloroplastic from Sorghum bicolor (Sorghum).